We begin with the raw amino-acid sequence, 1461 residues long: Phospholipid-transporting ATPase VB (1461 aa).

Topologically, residues 1–82 (MALSVDSSWH…TTKYTLFTFL (82 aa)) are cytoplasmic. A helical transmembrane segment spans residues 83–104 (PRNLFEQFHRWANLYFLFLVIL). Topologically, residues 105–110 (NWMPSM) are exoplasmic loop. Residues 111-132 (EVFHREITMLPLAIVLFVIMIK) traverse the membrane as a helical segment. Over 133 to 316 (DGMEDFKRHR…SKIERRMNID (184 aa)) the chain is Cytoplasmic. Residues 317 to 338 (IFFCIGILILMCLIGAVGHSIW) form a helical membrane-spanning segment. Residues 339 to 368 (NGTFEEHPPFDVPDANGSFLPSALGGFYMF) are Exoplasmic loop-facing. The helical transmembrane segment at 369–390 (LTMIILLQVLIPISLYVSIELV) threads the bilayer. At 391-1111 (KLGQVFFLSN…GHWCYSRLAR (721 aa)) the chain is on the cytoplasmic side. Asp-433 (4-aspartylphosphate intermediate) is an active-site residue. The ATP site is built by Asp-433, Lys-434, and Thr-435. Residue Asp-433 coordinates Mg(2+). Thr-435 is a Mg(2+) binding site. 2 stretches are compositionally biased toward polar residues: residues 496 to 511 (MRSQ…SQSA) and 530 to 539 (SQPPVAFSSS). Disordered stretches follow at residues 496-541 (MRSQ…SSIE) and 640-687 (TAPS…MWDQ). ATP contacts are provided by Glu-724, Phe-766, Lys-790, Arg-835, Thr-915, Gly-916, Asp-917, Arg-1029, and Lys-1035. Asp-1055 is a Mg(2+) binding site. ATP contacts are provided by Asn-1058 and Asp-1059. Residue Asp-1059 coordinates Mg(2+). The helical transmembrane segment at 1112–1132 (MVVYYLYKNVCYVNLLFWYQF) threads the bilayer. Residues 1133–1144 (FCGFSSSTMIDY) lie on the Exoplasmic loop side of the membrane. A helical transmembrane segment spans residues 1145–1164 (WQMIFFNLFFTSLPPLVFGV). The Cytoplasmic segment spans residues 1165 to 1194 (LDKDISAETLLALPELYKSGQNSECYNLST). A helical transmembrane segment spans residues 1195–1216 (FWISMVDAFYQSLICFFIPYLA). Over 1217-1223 (YKGSDID) the chain is Exoplasmic loop. A helical membrane pass occupies residues 1224-1246 (VFTFGTPINTISLTTILLHQAME). The Cytoplasmic portion of the chain corresponds to 1247 to 1252 (MKTWTI). Residues 1253–1273 (FHGVVLLGSFLMYFLVSLLYN) traverse the membrane as a helical segment. Topologically, residues 1274–1291 (ATCVICNSPTNPYWVMEG) are exoplasmic loop. Residues 1292–1316 (QLSNPTFYLVCFLTPVVALLPRYFF) form a helical membrane-spanning segment. Topologically, residues 1317-1461 (LSLQGTCGKS…HRRSQSSLTI (145 aa)) are cytoplasmic. Positions 1346–1397 (IQSWRSRQRPAPVPEVARPTHHPVSSITGQDFSASTPKSSNPPKRKHVEESV) are disordered. Residues 1368–1387 (PVSSITGQDFSASTPKSSNP) show a composition bias toward polar residues.

Belongs to the cation transport ATPase (P-type) (TC 3.A.3) family. Type IV subfamily. In terms of assembly, component of a P4-ATPase flippase complex which consists of a catalytic alpha subunit ATP10B and an accessory beta subunit TMEM30A. Mg(2+) serves as cofactor. In terms of processing, autophosphorylated at the conserved aspartate of the P-type ATPase signature sequence. Expressed in predominantly in brain structures including medulla oblongata, substantia nigra and basal ganglia. Expressed in the gastrointestinal system with highest levels in the small intestine and colon. Also expressed at low levels in testis and thymus.

It localises to the late endosome membrane. The protein localises to the lysosome membrane. It is found in the endoplasmic reticulum membrane. It catalyses the reaction ATP + H2O + phospholipidSide 1 = ADP + phosphate + phospholipidSide 2.. It carries out the reaction a beta-D-glucosyl-(1&lt;-&gt;1')-N-acylsphing-4-enine(out) + ATP + H2O = a beta-D-glucosyl-(1&lt;-&gt;1')-N-acylsphing-4-enine(in) + ADP + phosphate + H(+). Its function is as follows. Catalytic component of a P4-ATPase flippase complex, which catalyzes the hydrolysis of ATP coupled to the transport of glucosylceramide (GlcCer) from the outer to the inner leaflet of lysosome membranes. Plays an important role in the maintenance of lysosome membrane integrity and function in cortical neurons. The sequence is that of Phospholipid-transporting ATPase VB from Homo sapiens (Human).